Consider the following 262-residue polypeptide: tRNA pseudouridine synthase A (262 aa).

The active-site Nucleophile is the Asp51. Tyr109 is a binding site for substrate.

The protein belongs to the tRNA pseudouridine synthase TruA family. In terms of assembly, homodimer.

The catalysed reaction is uridine(38/39/40) in tRNA = pseudouridine(38/39/40) in tRNA. Functionally, formation of pseudouridine at positions 38, 39 and 40 in the anticodon stem and loop of transfer RNAs. This is tRNA pseudouridine synthase A from Actinobacillus pleuropneumoniae serotype 5b (strain L20).